We begin with the raw amino-acid sequence, 31 residues long: Dermaseptin-DI3 (31 aa).

It belongs to the frog skin active peptide (FSAP) family. Dermaseptin subfamily. In terms of tissue distribution, expressed by the skin glands.

It localises to the secreted. Its function is as follows. Antibacterial activity against Gram-positive bacteria S.aureus and E.faecalis, and Gram-negative bacteria P.aeruginosa and E.coli. This Phyllomedusa distincta (Monkey frog) protein is Dermaseptin-DI3.